We begin with the raw amino-acid sequence, 511 residues long: Probable cytochrome P450 4ac2 (511 aa).

Residues E318 and C455 each contribute to the heme site.

This sequence belongs to the cytochrome P450 family. The cofactor is heme.

Its subcellular location is the endoplasmic reticulum membrane. The protein resides in the microsome membrane. In terms of biological role, may be involved in the metabolism of insect hormones and in the breakdown of synthetic insecticides. This Drosophila melanogaster (Fruit fly) protein is Probable cytochrome P450 4ac2 (Cyp4ac2).